The chain runs to 428 residues: Glutamate-1-semialdehyde 2,1-aminomutase 1 (428 aa).

N6-(pyridoxal phosphate)lysine is present on K267.

Belongs to the class-III pyridoxal-phosphate-dependent aminotransferase family. HemL subfamily. Homodimer. The cofactor is pyridoxal 5'-phosphate.

It localises to the cytoplasm. The enzyme catalyses (S)-4-amino-5-oxopentanoate = 5-aminolevulinate. The protein operates within porphyrin-containing compound metabolism; protoporphyrin-IX biosynthesis; 5-aminolevulinate from L-glutamyl-tRNA(Glu): step 2/2. The chain is Glutamate-1-semialdehyde 2,1-aminomutase 1 from Staphylococcus aureus (strain Mu3 / ATCC 700698).